Consider the following 193-residue polypeptide: ATP-dependent Clp protease proteolytic subunit 1 (193 aa).

Residue serine 98 is the Nucleophile of the active site. The active site involves histidine 123.

Belongs to the peptidase S14 family. In terms of assembly, fourteen ClpP subunits assemble into 2 heptameric rings which stack back to back to give a disk-like structure with a central cavity, resembling the structure of eukaryotic proteasomes.

Its subcellular location is the cytoplasm. The catalysed reaction is Hydrolysis of proteins to small peptides in the presence of ATP and magnesium. alpha-casein is the usual test substrate. In the absence of ATP, only oligopeptides shorter than five residues are hydrolyzed (such as succinyl-Leu-Tyr-|-NHMec, and Leu-Tyr-Leu-|-Tyr-Trp, in which cleavage of the -Tyr-|-Leu- and -Tyr-|-Trp bonds also occurs).. Functionally, cleaves peptides in various proteins in a process that requires ATP hydrolysis. Has a chymotrypsin-like activity. Plays a major role in the degradation of misfolded proteins. In Bacillus cereus (strain ATCC 10987 / NRS 248), this protein is ATP-dependent Clp protease proteolytic subunit 1.